A 177-amino-acid chain; its full sequence is Isopentenyl-diphosphate Delta-isomerase 2 (177 aa).

The Mn(2+) site is built by histidine 24 and histidine 30. The Nudix hydrolase domain maps to methionine 28–lysine 160. Cysteine 65 is an active-site residue. Cysteine 65 serves as a coordination point for Mg(2+). A Mn(2+)-binding site is contributed by histidine 67. Glutamate 85 provides a ligand contact to Mg(2+). Mn(2+) is bound by residues glutamate 110 and glutamate 112. Glutamate 112 is a catalytic residue.

Belongs to the IPP isomerase type 1 family. Homodimer. Requires Mg(2+) as cofactor. The cofactor is Mn(2+).

The protein localises to the cytoplasm. It carries out the reaction isopentenyl diphosphate = dimethylallyl diphosphate. It functions in the pathway isoprenoid biosynthesis; dimethylallyl diphosphate biosynthesis; dimethylallyl diphosphate from isopentenyl diphosphate: step 1/1. Its function is as follows. Catalyzes the 1,3-allylic rearrangement of the homoallylic substrate isopentenyl (IPP) to its highly electrophilic allylic isomer, dimethylallyl diphosphate (DMAPP). This is Isopentenyl-diphosphate Delta-isomerase 2 from Photorhabdus laumondii subsp. laumondii (strain DSM 15139 / CIP 105565 / TT01) (Photorhabdus luminescens subsp. laumondii).